Consider the following 167-residue polypeptide: Phospholipase A2 imperatoxin-1 (167 aa).

Residues Trp-38, Gly-40, and Gly-42 each contribute to the Ca(2+) site. 5 disulfides stabilise this stretch: Cys-39–Cys-61, Cys-60–Cys-99, Cys-67–Cys-92, Cys-90–Cys-127, and Cys-132–Cys-144. His-64 is an active-site residue. Asp-65 contacts Ca(2+). Asn-102 is a glycosylation site (N-linked (GlcNAc...) asparagine). Residues Arg-136–Arg-140 constitute a propeptide that is removed on maturation.

The protein belongs to the phospholipase A2 family. Group III subfamily. In terms of assembly, heterodimer composed of a large subunit and a small subunit; disulfide-linked. Requires Ca(2+) as cofactor. As to expression, expressed by the venom gland.

The protein resides in the secreted. It carries out the reaction a 1,2-diacyl-sn-glycero-3-phosphocholine + H2O = a 1-acyl-sn-glycero-3-phosphocholine + a fatty acid + H(+). Functionally, phospholipase toxin, which may catalyze the calcium-dependent hydrolysis of the 2-acyl groups in 3-sn-phosphoglycerides. Inhibits both skeletal (RYR1) and cardiac (RYR2) ryanodine receptors (calcium release channels). Probably blocks ryanodine receptors by generating a lipid product. The chain is Phospholipase A2 imperatoxin-1 from Pandinus imperator (Emperor scorpion).